We begin with the raw amino-acid sequence, 469 residues long: Adenosylhomocysteinase (469 aa).

Residues T60, D135, and E195 each contribute to the substrate site. 196-198 lines the NAD(+) pocket; the sequence is TTT. Substrate is bound by residues K225 and D229. Residues N230, 259 to 264, E282, N317, 338 to 340, and N383 each bind NAD(+); these read GYGDVG and IGH.

This sequence belongs to the adenosylhomocysteinase family. NAD(+) serves as cofactor.

Its subcellular location is the cytoplasm. It catalyses the reaction S-adenosyl-L-homocysteine + H2O = L-homocysteine + adenosine. Its pathway is amino-acid biosynthesis; L-homocysteine biosynthesis; L-homocysteine from S-adenosyl-L-homocysteine: step 1/1. Functionally, may play a key role in the regulation of the intracellular concentration of adenosylhomocysteine. In Hyphomonas neptunium (strain ATCC 15444), this protein is Adenosylhomocysteinase.